Reading from the N-terminus, the 36-residue chain is Pancreatic polypeptide (36 aa).

The residue at position 36 (Tyr-36) is a Tyrosine amide.

The protein belongs to the NPY family.

It localises to the secreted. Hormone secreted by pancreatic cells that acts as a regulator of pancreatic and gastrointestinal functions probably by signaling through the G protein-coupled receptor NPY4R2. In Ceratotherium simum (White rhinoceros), this protein is Pancreatic polypeptide (PPY).